A 314-amino-acid chain; its full sequence is L-lactate dehydrogenase (314 aa).

NAD(+) contacts are provided by residues V17, D38, K43, Y69, and 83 to 84; that span reads GA. Q86 and R92 together coordinate substrate. Residues S105, 122 to 124, and S147 each bind NAD(+); that span reads ASN. 124–127 provides a ligand contact to substrate; the sequence is NPVD. Position 152 to 155 (152 to 155) interacts with substrate; sequence DSAR. The beta-D-fructose 1,6-bisphosphate site is built by R157 and H172. Residue H179 is the Proton acceptor of the active site. Y223 is modified (phosphotyrosine). T232 contributes to the substrate binding site.

It belongs to the LDH/MDH superfamily. LDH family. Homotetramer.

Its subcellular location is the cytoplasm. The enzyme catalyses (S)-lactate + NAD(+) = pyruvate + NADH + H(+). The protein operates within fermentation; pyruvate fermentation to lactate; (S)-lactate from pyruvate: step 1/1. With respect to regulation, allosterically activated by fructose 1,6-bisphosphate (FBP). In terms of biological role, catalyzes the conversion of lactate to pyruvate. The sequence is that of L-lactate dehydrogenase from Corynebacterium glutamicum (strain R).